We begin with the raw amino-acid sequence, 413 residues long: Palmitoyl-acyl carrier protein thioesterase, chloroplastic (413 aa).

The N-terminal 57 residues, 1–57 (MVATAVTSAFFPVTSSPDSSDSKNKKLGSIKSKPSVSSGSLQVKANAQAPPKINGTV), are a transit peptide targeting the chloroplast. The interval 12 to 79 (PVTSSPDSSD…DGASSPPPRT (68 aa)) is disordered. Low complexity predominate over residues 29-40 (SIKSKPSVSSGS). Residues Asn310, His312, and Cys347 contribute to the active site. A disordered region spans residues 394 to 413 (WRPKHAKSSANMDQITAKRA).

It belongs to the acyl-ACP thioesterase family.

The protein resides in the plastid. Its subcellular location is the chloroplast. The catalysed reaction is hexadecanoyl-[ACP] + H2O = hexadecanoate + holo-[ACP] + H(+). Plays an essential role in chain termination during de novo fatty acid synthesis. High thioesterase activity for palmitoyl-ACP versus other acyl-ACPs. The protein is Palmitoyl-acyl carrier protein thioesterase, chloroplastic (FATB1) of Gossypium hirsutum (Upland cotton).